The primary structure comprises 561 residues: (+)-alpha-pinene synthase TPS2FN (561 aa).

(2E)-geranyl diphosphate is bound by residues Arg-276, Asp-313, Asp-317, Arg-455, and Asp-458. Mg(2+) contacts are provided by Asp-313 and Asp-317. The short motif at 313–317 (DDIYD) is the DDXXD motif element. The Mg(2+) site is built by Asp-458, Thr-462, and Glu-466.

Belongs to the terpene synthase family. Tpsb subfamily. Requires Mg(2+) as cofactor. It depends on Mn(2+) as a cofactor. In terms of tissue distribution, expressed in glandular trichomes two to four weeks after flowering onset.

It catalyses the reaction (2E)-geranyl diphosphate = (1R,5R)-alpha-pinene + diphosphate. The catalysed reaction is (2E)-geranyl diphosphate = (4S)-limonene + diphosphate. It carries out the reaction (2E)-geranyl diphosphate = sabinene + diphosphate. The enzyme catalyses (2E)-geranyl diphosphate = beta-phellandrene + diphosphate. It catalyses the reaction (2E)-geranyl diphosphate = camphene + diphosphate. The catalysed reaction is (2E)-geranyl diphosphate = isoterpinolene + diphosphate. The protein operates within secondary metabolite biosynthesis; terpenoid biosynthesis. It participates in terpene metabolism; (-)-alpha-pinene biosynthesis; (-)-alpha-pinene from geranyl diphosphate: step 1/1. Its function is as follows. Involved in monoterpene (C10) olefins biosynthesis, constituants of cannabinoids and terpenoids-rich resins. Catalyzes mainly the conversion of (2E)-geranyl diphosphate to (+)-alpha-pinene, and also produces minor products such as camphene, sabinene, beta-phellandrene, (-)-limonene and isoterpinolene. The protein is (+)-alpha-pinene synthase TPS2FN of Cannabis sativa (Hemp).